The primary structure comprises 332 residues: Glycerol-3-phosphate dehydrogenase [NAD(P)+] (332 aa).

NADPH contacts are provided by Ser15, Trp16, and Lys110. Residues Lys110, Gly137, and Ser139 each coordinate sn-glycerol 3-phosphate. Residue Ala141 coordinates NADPH. Positions 192, 245, 255, 256, and 257 each coordinate sn-glycerol 3-phosphate. Lys192 serves as the catalytic Proton acceptor. Arg256 provides a ligand contact to NADPH. Glu282 contributes to the NADPH binding site.

The protein belongs to the NAD-dependent glycerol-3-phosphate dehydrogenase family.

It localises to the cytoplasm. The catalysed reaction is sn-glycerol 3-phosphate + NAD(+) = dihydroxyacetone phosphate + NADH + H(+). It catalyses the reaction sn-glycerol 3-phosphate + NADP(+) = dihydroxyacetone phosphate + NADPH + H(+). Its pathway is membrane lipid metabolism; glycerophospholipid metabolism. In terms of biological role, catalyzes the reduction of the glycolytic intermediate dihydroxyacetone phosphate (DHAP) to sn-glycerol 3-phosphate (G3P), the key precursor for phospholipid synthesis. This is Glycerol-3-phosphate dehydrogenase [NAD(P)+] from Coxiella burnetii (strain CbuG_Q212) (Coxiella burnetii (strain Q212)).